A 720-amino-acid polypeptide reads, in one-letter code: Nucleoporin 88 (720 aa).

Positions 584-611 (LALCREDRKSLTEAAERLADKYEDAKYR) form a coiled coil.

In terms of tissue distribution, widely expressed. Higher levels of expression are detected in highly proliferative frontal regions of the embryo, e.g. brain, eye and anterior trunk.

It is found in the nucleus. The protein resides in the nuclear pore complex. Component of the nuclear pore complex. This chain is Nucleoporin 88, found in Danio rerio (Zebrafish).